Reading from the N-terminus, the 379-residue chain is UDP-4-amino-4-deoxy-L-arabinose--oxoglutarate aminotransferase (379 aa).

At Lys-182 the chain carries N6-(pyridoxal phosphate)lysine.

The protein belongs to the DegT/DnrJ/EryC1 family. ArnB subfamily. As to quaternary structure, homodimer. The cofactor is pyridoxal 5'-phosphate.

It catalyses the reaction UDP-4-amino-4-deoxy-beta-L-arabinose + 2-oxoglutarate = UDP-beta-L-threo-pentopyranos-4-ulose + L-glutamate. It participates in nucleotide-sugar biosynthesis; UDP-4-deoxy-4-formamido-beta-L-arabinose biosynthesis; UDP-4-deoxy-4-formamido-beta-L-arabinose from UDP-alpha-D-glucuronate: step 2/3. The protein operates within bacterial outer membrane biogenesis; lipopolysaccharide biosynthesis. Its function is as follows. Catalyzes the conversion of UDP-4-keto-arabinose (UDP-Ara4O) to UDP-4-amino-4-deoxy-L-arabinose (UDP-L-Ara4N). The modified arabinose is attached to lipid A and is required for resistance to polymyxin and cationic antimicrobial peptides. The sequence is that of UDP-4-amino-4-deoxy-L-arabinose--oxoglutarate aminotransferase from Sodalis glossinidius (strain morsitans).